The sequence spans 237 residues: CD99 antigen-like protein 2 (237 aa).

An N-terminal signal peptide occupies residues 1–25 (MVARLTAFLVCLVFSLATLVQRGYG). At 26-161 (DTDGFNLEDA…PGSGISTETG (136 aa)) the chain is on the extracellular side. The tract at residues 47–157 (DHFSTTTRRP…SNDDPGSGIS (111 aa)) is disordered. 2 stretches are compositionally biased toward low complexity: residues 51-66 (TTTRRPVTTRAPANPA) and 74-84 (TTTTRRPGTTR). A compositionally biased stretch (basic and acidic residues) spans 102-111 (DDRNDLDGPK). Ser-154 is a glycosylation site (O-linked (Xyl...) (chondroitin sulfate) serine). A helical transmembrane segment spans residues 162–182 (TIAGVASALAMALIGAVSSYI). The Cytoplasmic segment spans residues 183–237 (SYQQKKFCFSIQQGLNADYVKGENLEAVVCEEPQVTYSKQETQSAEPPPPEPPRI). Residues 218 to 227 (TYSKQETQSA) are compositionally biased toward polar residues. Positions 218–237 (TYSKQETQSAEPPPPEPPRI) are disordered. Over residues 228-237 (EPPPPEPPRI) the composition is skewed to pro residues.

It belongs to the CD99 family. Post-translationally, O-glycosylated. Highly expressed in the nervous system, including brain, dentate nucleus of hippocampus, granular and Purkinje cells of cerebellum, brain stem nucleus and choroid plexus. Expressed in peripheral blood T- and B-cells and neutrophils (at protein level). Almost undetectable in bone marrow-derived neutrophils (at protein level). Also expressed in thymocytes (at protein level) with higher expression in cortical thymocytes than in medullary thymocytes. Expressed at high levels in testis (mostly in germ cells and Sertoli cells) and ovary (mostly in granulosa cells). Expressed in lung, heart, kidney and liver (at protein level); however, expression in heart, kidney and liver seems restricted to endothelial cells (at protein level). Highly expressed in endothelial cells and to a lower level in vascular smooth muscle cells (at protein level). Low expression in spleen.

The protein resides in the cell membrane. The protein localises to the cell junction. It is found in the secreted. Functionally, plays a role in a late step of leukocyte extravasation helping cells to overcome the endothelial basement membrane. Acts at the same site as, but independently of, PECAM1. Homophilic adhesion molecule, but these interactions may not be required for cell aggregation. In Mus musculus (Mouse), this protein is CD99 antigen-like protein 2 (Cd99l2).